Here is a 370-residue protein sequence, read N- to C-terminus: Probable neutral protease 2 homolog TRV_02539 (370 aa).

A signal peptide spans 1–19 (MQLVAALAALGALVAPAVA). Residues 20-188 (YPHAPMNETL…SIHSRALQKR (169 aa)) constitute a propeptide that is removed on maturation. Disulfide bonds link Cys-196-Cys-267 and Cys-274-Cys-292. A Zn(2+)-binding site is contributed by His-316. The active site involves Glu-317. Zn(2+) is bound by residues His-320 and Asp-331.

Belongs to the peptidase M35 family. Requires Zn(2+) as cofactor.

It localises to the secreted. The catalysed reaction is Preferential cleavage of bonds with hydrophobic residues in P1'. Also 3-Asn-|-Gln-4 and 8-Gly-|-Ser-9 bonds in insulin B chain.. Probable secreted metalloprotease that shows high activities on basic nuclear substrates such as histone and protamine. May be involved in virulence. The polypeptide is Probable neutral protease 2 homolog TRV_02539 (Trichophyton verrucosum (strain HKI 0517)).